Consider the following 61-residue polypeptide: Small ribosomal subunit protein uS14 (61 aa).

Residues Cys-24, Cys-27, Cys-40, and Cys-43 each coordinate Zn(2+).

Belongs to the universal ribosomal protein uS14 family. Zinc-binding uS14 subfamily. As to quaternary structure, part of the 30S ribosomal subunit. Contacts proteins S3 and S10. Requires Zn(2+) as cofactor.

Functionally, binds 16S rRNA, required for the assembly of 30S particles and may also be responsible for determining the conformation of the 16S rRNA at the A site. The polypeptide is Small ribosomal subunit protein uS14 (Mycoplasma genitalium (strain ATCC 33530 / DSM 19775 / NCTC 10195 / G37) (Mycoplasmoides genitalium)).